The primary structure comprises 129 residues: 3-aminoacrylate deaminase RutC (129 aa).

It belongs to the RutC family.

It catalyses the reaction (Z)-3-aminoacrylate + H2O + H(+) = 3-oxopropanoate + NH4(+). Functionally, involved in pyrimidine catabolism. Catalyzes the deamination of 3-aminoacrylate to malonic semialdehyde, a reaction that can also occur spontaneously. RutC may facilitate the reaction and modulate the metabolic fitness, rather than catalyzing essential functions. The polypeptide is 3-aminoacrylate deaminase RutC (Caulobacter segnis (strain ATCC 21756 / DSM 7131 / JCM 7823 / NBRC 15250 / LMG 17158 / TK0059) (Mycoplana segnis)).